Here is a 142-residue protein sequence, read N- to C-terminus: Large ribosomal subunit protein uL13 (142 aa).

This sequence belongs to the universal ribosomal protein uL13 family. In terms of assembly, part of the 50S ribosomal subunit.

In terms of biological role, this protein is one of the early assembly proteins of the 50S ribosomal subunit, although it is not seen to bind rRNA by itself. It is important during the early stages of 50S assembly. This chain is Large ribosomal subunit protein uL13, found in Shewanella amazonensis (strain ATCC BAA-1098 / SB2B).